The following is a 284-amino-acid chain: Bifunctional protein FolD 1 (284 aa).

NADP(+)-binding positions include G164–S166, S189, and I230.

It belongs to the tetrahydrofolate dehydrogenase/cyclohydrolase family. Homodimer.

It catalyses the reaction (6R)-5,10-methylene-5,6,7,8-tetrahydrofolate + NADP(+) = (6R)-5,10-methenyltetrahydrofolate + NADPH. It carries out the reaction (6R)-5,10-methenyltetrahydrofolate + H2O = (6R)-10-formyltetrahydrofolate + H(+). It functions in the pathway one-carbon metabolism; tetrahydrofolate interconversion. Functionally, catalyzes the oxidation of 5,10-methylenetetrahydrofolate to 5,10-methenyltetrahydrofolate and then the hydrolysis of 5,10-methenyltetrahydrofolate to 10-formyltetrahydrofolate. The polypeptide is Bifunctional protein FolD 1 (Rubrobacter xylanophilus (strain DSM 9941 / JCM 11954 / NBRC 16129 / PRD-1)).